A 208-amino-acid chain; its full sequence is Uracil phosphoribosyltransferase (208 aa).

Residues R78, R103, and 130–138 each bind 5-phospho-alpha-D-ribose 1-diphosphate; that span reads DPMLATGVS. Uracil contacts are provided by residues I193 and 198 to 200; that span reads GDA. Residue D199 participates in 5-phospho-alpha-D-ribose 1-diphosphate binding.

The protein belongs to the UPRTase family. Mg(2+) is required as a cofactor.

The enzyme catalyses UMP + diphosphate = 5-phospho-alpha-D-ribose 1-diphosphate + uracil. The protein operates within pyrimidine metabolism; UMP biosynthesis via salvage pathway; UMP from uracil: step 1/1. With respect to regulation, allosterically activated by GTP. Its function is as follows. Catalyzes the conversion of uracil and 5-phospho-alpha-D-ribose 1-diphosphate (PRPP) to UMP and diphosphate. This chain is Uracil phosphoribosyltransferase, found in Thermosipho africanus (strain TCF52B).